A 677-amino-acid chain; its full sequence is Fermitin family homolog 1 (677 aa).

Residues 96–653 (MLRLRLPNLK…HEYIGGYIFL (558 aa)) enclose the FERM domain. A phosphoserine mark is found at Ser170, Ser179, and Ser361. The 97-residue stretch at 377-473 (KLFRPKKLLP…WMAACMLASK (97 aa)) folds into the PH domain.

Belongs to the kindlin family. In terms of assembly, interacts with the cytoplasmic domain of integrins ITGB1 and ITGB3. As to expression, expressed in brain, skeletal muscle, kidney, colon, adrenal gland, prostate, and placenta. Weakly or not expressed in heart, thymus, spleen, liver, small intestine, bone marrow, lung and peripheral blood leukocytes. Overexpressed in some colon and lung tumors. In skin, it is localized within the epidermis and particularly in basal keratocytes. Not detected in epidermal melanocytes and dermal fibroblasts.

The protein resides in the cytoplasm. It is found in the cytoskeleton. Its subcellular location is the cell junction. The protein localises to the focal adhesion. It localises to the cell projection. The protein resides in the ruffle membrane. Involved in cell adhesion. Contributes to integrin activation. When coexpressed with talin, potentiates activation of ITGA2B. Required for normal keratinocyte proliferation. Required for normal polarization of basal keratinocytes in skin, and for normal cell shape. Required for normal adhesion of keratinocytes to fibronectin and laminin, and for normal keratinocyte migration to wound sites. May mediate TGF-beta 1 signaling in tumor progression. This chain is Fermitin family homolog 1 (FERMT1), found in Homo sapiens (Human).